Reading from the N-terminus, the 1742-residue chain is Unconventional myosin-Vc (1742 aa).

Alanine 2 carries the N-acetylalanine modification. Residues 8 to 62 (TQYNRVWIPDPEEVWKSAEIAKDYRVGDKVLRLLLEDGTELDYSVNPESLPPLRN) enclose the Myosin N-terminal SH3-like domain. The Myosin motor domain occupies 67 to 753 (VGENDLTALS…QVAYLEKLRL (687 aa)). Position 161-168 (161-168 (GESGAGKT)) interacts with ATP. The actin-binding stretch occupies residues 632–654 (LYLLMETLNATTPHYVRCIKPND). IQ domains lie at 756–779 (LRQSCVMVQKHMRGWLQRKKFLRE), 780–806 (RRAALIIQQYFRGQQTVRKAITAVALK), 807–829 (EAWAAIIIQKHCRGYLVRSLYQL), 830–854 (IRMATITMQAYSRGFLARRRYRKML), and 855–884 (EEHKAVILQKYARAWLARRRFQSIRRFVLN). Residues 884-1351 (NIQLTYRVQR…SKTIGKANDV (468 aa)) are a coiled coil. Residues 1421 to 1697 (NSTINGIKQV…VRKVQALLNS (277 aa)) enclose the Dilute domain.

The protein belongs to the TRAFAC class myosin-kinesin ATPase superfamily. Myosin family. Expressed chiefly in non-neuronal tissues. Particularly abundant in epithelial and glandular tissues including pancreas, prostate, mammary, stomach, colon and lung.

Its function is as follows. May be involved in transferrin trafficking. Likely to power actin-based membrane trafficking in many physiologically crucial tissues. This chain is Unconventional myosin-Vc (MYO5C), found in Homo sapiens (Human).